The chain runs to 367 residues: Peptide chain release factor 2 (367 aa).

N5-methylglutamine is present on Gln-254.

Belongs to the prokaryotic/mitochondrial release factor family. Post-translationally, methylated by PrmC. Methylation increases the termination efficiency of RF2.

The protein resides in the cytoplasm. Its function is as follows. Peptide chain release factor 2 directs the termination of translation in response to the peptide chain termination codons UGA and UAA. The chain is Peptide chain release factor 2 from Leptospira interrogans serogroup Icterohaemorrhagiae serovar Lai (strain 56601).